A 326-amino-acid chain; its full sequence is Tagatose 1,6-diphosphate aldolase (326 aa).

It belongs to the aldolase LacD family.

It catalyses the reaction D-tagatofuranose 1,6-bisphosphate = D-glyceraldehyde 3-phosphate + dihydroxyacetone phosphate. The protein operates within carbohydrate metabolism; D-tagatose 6-phosphate degradation; D-glyceraldehyde 3-phosphate and glycerone phosphate from D-tagatose 6-phosphate: step 2/2. In Staphylococcus aureus (strain Mu3 / ATCC 700698), this protein is Tagatose 1,6-diphosphate aldolase.